The primary structure comprises 144 residues: Ethylene-responsive transcription factor ERF019 (144 aa).

The AP2/ERF DNA-binding region spans 13–72; that stretch reads KYKGIRRRKWGKWVSEIRVPGTRDRLWLGSFSTAEGAAVAHDVAFFCLHQPDSLESLNFP.

The protein belongs to the AP2/ERF transcription factor family. ERF subfamily.

It localises to the nucleus. Its function is as follows. Probably acts as a transcriptional activator. Binds to the GCC-box pathogenesis-related promoter element. May be involved in the regulation of gene expression by stress factors and by components of stress signal transduction pathways. The protein is Ethylene-responsive transcription factor ERF019 (ERF019) of Arabidopsis thaliana (Mouse-ear cress).